The following is a 664-amino-acid chain: Protein fem-1 homolog CG6966 (664 aa).

6 ANK repeats span residues 40–70 (NGAT…NVEQ), 82–111 (EDAP…NVNS), 115–144 (TNST…DFEV), 148–177 (HGHT…DVNR), 181–210 (KGNT…TMDV), and 213–242 (YGMT…VSRE). TPR repeat units follow at residues 245–279 (IHAL…RAVE) and 335–368 (SYYI…QQKI). The segment at 433-460 (QQKDQQHPQKQLPAADKSPSCSASSSAS) is disordered. A compositionally biased stretch (low complexity) spans 450 to 460 (SPSCSASSSAS). 2 ANK repeats span residues 529-571 (FDRT…DPNA) and 575-605 (AGNT…HLDT).

Belongs to the fem-1 family. In terms of assembly, component of a CRL2 E3 ubiquitin-protein ligase complex, also named ECS (Elongin BC-CUL2/5-SOCS-box protein) complex.

Its pathway is protein modification; protein ubiquitination. Functionally, substrate-recognition component of a Cul2-RING (CRL2) E3 ubiquitin-protein ligase complex of the DesCEND (destruction via C-end degrons) pathway, which recognizes a C-degron located at the extreme C terminus of target proteins, leading to their ubiquitination and degradation. The C-degron recognized by the DesCEND pathway is usually a motif of less than ten residues and can be present in full-length proteins, truncated proteins or proteolytically cleaved forms. This chain is Protein fem-1 homolog CG6966, found in Drosophila melanogaster (Fruit fly).